The chain runs to 364 residues: Deoxyribonuclease-2-alpha (364 aa).

A signal peptide spans 1 to 21; that stretch reads MATLSPLLLAALLWVPVGTLT. C22 and C161 form a disulfide bridge. N72, N88, N171, N214, N268, and N292 each carry an N-linked (GlcNAc...) asparagine glycan. Cystine bridges form between C269-C349 and C310-C329. H297 is a catalytic residue.

This sequence belongs to the DNase II family.

The protein localises to the lysosome. The enzyme catalyses Endonucleolytic cleavage to nucleoside 3'-phosphates and 3'-phosphooligonucleotide end-products.. Functionally, hydrolyzes DNA under acidic conditions with a preference for double-stranded DNA. Plays a major role in the clearance of nucleic acids generated through apoptosis, hence preventing autoinflammation. Necessary for proper fetal development and for definitive erythropoiesis in fetal liver and bone marrow, where it degrades nuclear DNA expelled from erythroid precursor cells. The sequence is that of Deoxyribonuclease-2-alpha (DNASE2) from Sus scrofa (Pig).